A 598-amino-acid chain; its full sequence is Fibulin-1 (598 aa).

Disulfide bonds link A1–C25, C7–C26, C28–C52, C29–C59, C42–C60, C96–C106, C102–C115, C117–C130, C136–C149, C143–C158, C164–C176, C182–C195, C189–C204, C210–C222, C228–C242, C257–C270, C275–C288, C282–C297, C299–C312, C318–C330, C326–C339, C341–C354, C360–C369, C365–C378, C380–C394, C400–C413, C409–C422, C424–C438, C444–C457, C451–C466, and C471–C483. 2 consecutive Anaphylatoxin-like domains span residues 1 to 27 (ANEQ…RCCH) and 28 to 60 (CCLL…RACC). A glycan (N-linked (GlcNAc...) asparagine) is linked at N14. Positions 92–131 (LNDRCRGGGPCKQQCRDTGDEVVCSCFVGYQLLSDGVSCE) constitute an EGF-like 1 domain. Residues 132–177 (DVNECITGSHSCRLGESCINTVGSFRCQRDSSCGTGYELTEDNSCK) form the EGF-like 2; calcium-binding domain. In terms of domain architecture, EGF-like 3; calcium-binding spans 178–223 (DIDQCESGIHNCLPDFICQNTLGSFRCRPKLQCKNGFIQDALANCI). The 47-residue stretch at 224–270 (DINECLSIVSAPCPTGHTCINTEGSYTQKNVPNCGRGYHLNEEGTRC) folds into the EGF-like 4; calcium-binding domain. The EGF-like 5; calcium-binding domain maps to 271–313 (DVNECAPPAEPCGKGHRCVNSPGSFRCECKTGYYFDGISRMCV). Residues 271–355 (DVNECAPPAE…RLSVDGRSCE (85 aa)) form a self-association and FN1-binding region. In terms of domain architecture, EGF-like 6; calcium-binding spans 314–355 (DVNECQRYPGRLCGHKCENTLGSYVCSCSVGFRLSVDGRSCE). Positions 356–395 (DINECSSSPCSQECANVYGSYQCYCRRGYQLSDVDGVTCE) constitute an EGF-like 7; calcium-binding domain. Residues 396–439 (DIDECALPTGGHICSYRCINIPGSFQCSCPASGYRLAPNGRNCQ) form the EGF-like 8; calcium-binding domain. The EGF-like 9; calcium-binding domain maps to 440–484 (DIDECVTGIHNCSINETCFNIQGGFRCLAFECPENYRRSAATRCE). N-linked (GlcNAc...) asparagine glycosylation is found at N450 and N454.

Belongs to the fibulin family. In terms of assembly, homomultimerizes and interacts with various extracellular matrix components. Interacts with FBLN7. Interacts with the mature/soluble form of DTR. Interacts with CCN3.

The protein localises to the secreted. Its subcellular location is the extracellular space. It localises to the extracellular matrix. In terms of biological role, incorporated into fibronectin-containing matrix fibers. May play a role in cell adhesion and migration along protein fibers within the extracellular matrix (ECM). Could be important for certain developmental processes and contribute to the supramolecular organization of ECM architecture, in particular to those of basement membranes. May serve to anchor the mature/soluble form of DTR to its fibers as it migrates through the extracellular matrix. The direct physical association with DTR may be useful in such tissue developmental processes as wound healing. The polypeptide is Fibulin-1 (FBLN1) (Chlorocebus aethiops (Green monkey)).